The chain runs to 1220 residues: von Willebrand factor A domain-containing protein 5B1 (1220 aa).

Residues 1–18 (MPGLLNWITGAALPLTAS) form the signal peptide. Residues 19 to 149 (DVTSCVSGYA…NVTIFISTSS (131 aa)) enclose the VIT domain. N140 carries N-linked (GlcNAc...) asparagine glycosylation. The region spanning 361–529 (EFIFLIDRSS…RLQPKMVKSL (169 aa)) is the VWFA domain. The N-linked (GlcNAc...) asparagine glycan is linked to N650. The disordered stretch occupies residues 715-807 (NSGQDLNQGP…SPSRPATPAP (93 aa)). Residues 757 to 774 (VRERTSDSRSPGDLEPSH) are compositionally biased toward basic and acidic residues. Residues 796–807 (RASPSRPATPAP) are compositionally biased toward low complexity. Phosphotyrosine is present on Y881. Disordered stretches follow at residues 937-962 (RGTS…GKFQ) and 976-995 (EARS…QRSL). A glycan (N-linked (GlcNAc...) asparagine) is linked at N1017. Over residues 1093–1111 (TTRPSESKTPSPQLCTSSP) the composition is skewed to polar residues. Residues 1093-1115 (TTRPSESKTPSPQLCTSSPPRHP) are disordered.

It localises to the secreted. The chain is von Willebrand factor A domain-containing protein 5B1 (VWA5B1) from Homo sapiens (Human).